Here is a 419-residue protein sequence, read N- to C-terminus: Oxamate carbamoyltransferase subunit AllG (419 aa).

It belongs to the AllG family. The OXTCase is composed of 3 subunits, AllF, AllG and AllH. Mg(2+) serves as cofactor.

It catalyses the reaction oxamate + carbamoyl phosphate = N-carbamoyl-2-oxoglycine + phosphate. The protein operates within nitrogen metabolism; (S)-allantoin degradation. Functionally, component of a carbamoyltransferase involved in the anaerobic nitrogen utilization via the assimilation of allantoin. Catalyzes the conversion of oxalurate (N-carbamoyl-2-oxoglycine) to oxamate and carbamoyl phosphate. This is Oxamate carbamoyltransferase subunit AllG from Escherichia coli (strain K12).